The following is a 411-amino-acid chain: Calmodulin-binding receptor-like cytoplasmic kinase 2 (411 aa).

2 disordered regions span residues 1-44 and 66-99; these read MPSR…DTTT and SNYIDNSKSSSDNNIRSRRSSTGSSSVQRSYGNA. 2 stretches are compositionally biased toward low complexity: residues 16-44 and 66-95; these read TTSSNYSNTTFTDRSFPTTPARTSTDTTT and SNYIDNSKSSSDNNIRSRRSSTGSSSVQRS. The residue at position 108 (Thr-108) is a Phosphothreonine. Residues 119 to 398 form the Protein kinase domain; sequence FSPSFRIGQG…MKKCSEILWG (280 aa). ATP contacts are provided by residues 125–133 and Lys-147; that span reads IGQGGFGTV. The tract at residues 134–159 is caM-binding; sequence YKVKLRDGKTFAVKRAKKSMHDDRQG. The active-site Proton acceptor is the Asp-247. Ser-251 and Ser-283 each carry phosphoserine. Residues Thr-284 and Thr-289 each carry the phosphothreonine modification. Phosphotyrosine is present on Tyr-297.

It belongs to the protein kinase superfamily. Ser/Thr protein kinase family. In terms of assembly, interacts with calmodulin (CaM) in a Ca(2+)-dependent manner.

The protein resides in the cytoplasm. It carries out the reaction L-seryl-[protein] + ATP = O-phospho-L-seryl-[protein] + ADP + H(+). The enzyme catalyses L-threonyl-[protein] + ATP = O-phospho-L-threonyl-[protein] + ADP + H(+). The chain is Calmodulin-binding receptor-like cytoplasmic kinase 2 (CRCK2) from Arabidopsis thaliana (Mouse-ear cress).